Here is a 192-residue protein sequence, read N- to C-terminus: Ubiquitin-conjugating enzyme E2 1 (192 aa).

Positions M1–P28 are disordered. The region spanning P4 to L150 is the UBC core domain. The active-site Glycyl thioester intermediate is the C88. Positions A171–A192 are disordered.

The protein belongs to the ubiquitin-conjugating enzyme family. As to quaternary structure, interacts with ubr-1 and rfp-1. Interacts with ubc-13.

It catalyses the reaction S-ubiquitinyl-[E1 ubiquitin-activating enzyme]-L-cysteine + [E2 ubiquitin-conjugating enzyme]-L-cysteine = [E1 ubiquitin-activating enzyme]-L-cysteine + S-ubiquitinyl-[E2 ubiquitin-conjugating enzyme]-L-cysteine.. It participates in protein modification; protein ubiquitination. Catalyzes the covalent attachment of ubiquitin to other proteins. The sequence is that of Ubiquitin-conjugating enzyme E2 1 (ubc-1) from Caenorhabditis elegans.